The chain runs to 313 residues: DNA-directed RNA polymerase subunit alpha (313 aa).

An alpha N-terminal domain (alpha-NTD) region spans residues Met-1 to Tyr-227. The tract at residues Arg-242–Glu-313 is alpha C-terminal domain (alpha-CTD).

The protein belongs to the RNA polymerase alpha chain family. In terms of assembly, homodimer. The RNAP catalytic core consists of 2 alpha, 1 beta, 1 beta' and 1 omega subunit. When a sigma factor is associated with the core the holoenzyme is formed, which can initiate transcription.

The enzyme catalyses RNA(n) + a ribonucleoside 5'-triphosphate = RNA(n+1) + diphosphate. In terms of biological role, DNA-dependent RNA polymerase catalyzes the transcription of DNA into RNA using the four ribonucleoside triphosphates as substrates. In Rubrobacter xylanophilus (strain DSM 9941 / JCM 11954 / NBRC 16129 / PRD-1), this protein is DNA-directed RNA polymerase subunit alpha.